Reading from the N-terminus, the 129-residue chain is Glycine cleavage system H protein (129 aa).

Residues 24–106 form the Lipoyl-binding domain; that stretch reads SVVVGVTQHA…YGAGWIVEIE (83 aa). The residue at position 65 (lysine 65) is an N6-lipoyllysine.

The protein belongs to the GcvH family. The glycine cleavage system is composed of four proteins: P, T, L and H. (R)-lipoate is required as a cofactor.

Functionally, the glycine cleavage system catalyzes the degradation of glycine. The H protein shuttles the methylamine group of glycine from the P protein to the T protein. In Myxococcus xanthus (strain DK1622), this protein is Glycine cleavage system H protein.